Here is a 220-residue protein sequence, read N- to C-terminus: Cytidylate kinase (220 aa).

Gly9 to Thr17 is a binding site for ATP.

The protein belongs to the cytidylate kinase family. Type 1 subfamily.

It localises to the cytoplasm. The catalysed reaction is CMP + ATP = CDP + ADP. The enzyme catalyses dCMP + ATP = dCDP + ADP. The chain is Cytidylate kinase from Thermotoga sp. (strain RQ2).